The sequence spans 330 residues: Probable L-lactate dehydrogenase (330 aa).

3 residues coordinate substrate: Arg105, Asn137, and Arg168. Asn137 contributes to the NAD(+) binding site. The active-site Proton acceptor is the His192.

It belongs to the LDH/MDH superfamily. LDH family. In terms of assembly, homotetramer.

The protein localises to the cytoplasm. The catalysed reaction is (S)-lactate + NAD(+) = pyruvate + NADH + H(+). It functions in the pathway fermentation; pyruvate fermentation to lactate; (S)-lactate from pyruvate: step 1/1. The polypeptide is Probable L-lactate dehydrogenase (Schizosaccharomyces pombe (strain 972 / ATCC 24843) (Fission yeast)).